The primary structure comprises 350 residues: Probable aldo-keto reductase 1 (350 aa).

Catalysis depends on Y67, which acts as the Proton donor. Substrate is bound at residue H135. 214–224 (SPLGKGFFSSG) serves as a coordination point for NADP(+).

This sequence belongs to the aldo/keto reductase family.

The polypeptide is Probable aldo-keto reductase 1 (Oryza sativa subsp. indica (Rice)).